The sequence spans 212 residues: MLEIFDVSFSLMSNNKLDEVFALRKGTFKDRLDWTVNCINGMEFDEYDNEHTTYLLGVKEGKIICSVRFIEMKYPNMITGTFFSYFDGLNIPEGNYIESSRFFVDRDRVRNLIGTRNPACLTLFLAMINYARKYHYDGILTIVSHPMLTLLKRSGWRISIIQQGLSEKQEKIYLLHLPTDDESRYALIERITRITNAESEQLTTLPLLVPLA.

It belongs to the autoinducer synthase family.

It catalyses the reaction a fatty acyl-[ACP] + S-adenosyl-L-methionine = an N-acyl-L-homoserine lactone + S-methyl-5'-thioadenosine + holo-[ACP] + H(+). Its function is as follows. Required for the synthesis of OHHL (N-(3-oxohexanoyl)-L-homoserine lactone), an autoinducer molecule which binds to ExpR and thus acts in virulence (soft rot disease) through the activation of genes for plant tissue macerating enzymes. The polypeptide is Acyl-homoserine-lactone synthase (expI) (Dickeya dadantii (strain 3937) (Erwinia chrysanthemi (strain 3937))).